Reading from the N-terminus, the 413-residue chain is tRNA (guanine-N(7)-)-methyltransferase non-catalytic subunit WDR4 (413 aa).

The residue at position 2 (A2) is an N-acetylalanine. 5 WD repeats span residues 61–100 (TGSD…CLSV), 102–141 (MVVR…GCGR), 145–185 (GHLS…IESF), 188–228 (GHTE…QLQC), and 289–329 (TFPH…WQAA). The tract at residues 380-413 (RLQQQLKKKRQRSPFPGSPEQTKKACPGQSALSC) is disordered. Phosphoserine is present on residues S392 and S412.

The protein belongs to the WD repeat TRM82 family. In terms of assembly, non-catalytic component of the METTL1-WDR4 complex, composed of METTL1 and WDR4. Interacts with FEN1; the interaction is direct.

The protein resides in the nucleus. It localises to the chromosome. The protein operates within tRNA modification; N(7)-methylguanine-tRNA biosynthesis. Functionally, non-catalytic component of the METTL1-WDR4 methyltransferase complex required for the formation of N(7)-methylguanine in a subset of RNA species, such as tRNAs, mRNAs and microRNAs (miRNAs). In the METTL1-WDR4 methyltransferase complex, WDR4 acts as a scaffold for tRNA-binding. Required for the formation of N(7)-methylguanine at position 46 (m7G46) in a large subset of tRNAs that contain the 5'-RAGGU-3' motif within the variable loop. M7G46 interacts with C13-G22 in the D-loop to stabilize tRNA tertiary structure and protect tRNAs from decay. Also required for the formation of N(7)-methylguanine at internal sites in a subset of mRNAs. Also required for methylation of a specific subset of miRNAs, such as let-7. Acts as a regulator of embryonic stem cell self-renewal and differentiation. Independently of METTL1, also plays a role in genome stability: localizes at the DNA replication site and regulates endonucleolytic activities of FEN1. This chain is tRNA (guanine-N(7)-)-methyltransferase non-catalytic subunit WDR4, found in Mus musculus (Mouse).